The following is a 474-amino-acid chain: Cyclin-dependent kinase 18 (474 aa).

Residues Ser14, Ser74, Ser89, Ser98, Ser117, and Ser132 each carry the phosphoserine modification. A disordered region spans residues Asn44 to Val93. In terms of domain architecture, Protein kinase spans Tyr144–Phe425. ATP is bound by residues Leu150–Val158 and Lys173. The active-site Proton acceptor is the Asp265. Ser440 and Ser443 each carry phosphoserine.

Belongs to the protein kinase superfamily. CMGC Ser/Thr protein kinase family. CDC2/CDKX subfamily. As to expression, isoform 2 expression is limited to several subcortical nuclei of the basal gangli and the spinal cord. Isoform 1 is widely expressed.

The catalysed reaction is L-seryl-[protein] + ATP = O-phospho-L-seryl-[protein] + ADP + H(+). The enzyme catalyses L-threonyl-[protein] + ATP = O-phospho-L-threonyl-[protein] + ADP + H(+). Functionally, may play a role in signal transduction cascades in terminally differentiated cells. The protein is Cyclin-dependent kinase 18 (CDK18) of Homo sapiens (Human).